The following is a 40-amino-acid chain: Photosystem II reaction center protein J (40 aa).

Residues 8–28 (IPLWLIGTVTGIPVIGLVGVF) traverse the membrane as a helical segment.

Belongs to the PsbJ family. As to quaternary structure, PSII is composed of 1 copy each of membrane proteins PsbA, PsbB, PsbC, PsbD, PsbE, PsbF, PsbH, PsbI, PsbJ, PsbK, PsbL, PsbM, PsbT, PsbX, PsbY, PsbZ, Psb30/Ycf12, at least 3 peripheral proteins of the oxygen-evolving complex and a large number of cofactors. It forms dimeric complexes.

Its subcellular location is the plastid. It localises to the chloroplast thylakoid membrane. Functionally, one of the components of the core complex of photosystem II (PSII). PSII is a light-driven water:plastoquinone oxidoreductase that uses light energy to abstract electrons from H(2)O, generating O(2) and a proton gradient subsequently used for ATP formation. It consists of a core antenna complex that captures photons, and an electron transfer chain that converts photonic excitation into a charge separation. The sequence is that of Photosystem II reaction center protein J from Lolium perenne (Perennial ryegrass).